The sequence spans 360 residues: MSALFSLVAVYVLVCALHKQIKKYASVCYLGSACVSVAVVCVVWSGATKGNFGVRVLLHPLTSASFSTAIFTFVMCASVLKNGLLKQRVMGLRAELAITAAILTLGHNIAHGRDYLVRLCGSTGDLSTGFLVAGAVSMVLVLLMSILAVTSFKVVRRRMGAKTWKRVQRLAYLFYGLTYVHLSFILLPTALRGYIPSVVSYVLYTVIFATYALLRVRKALGKRKGACALCSAAVAVSFVAFVLGASHMVRHTRRAHTERTTRAKARKCSPAEMKDGVYEASAQGHNGKLSLRVTISQGRIEAVTVVGHSDDDPYASWAVEGVSAAIVGAQSTDVDVVSEATSTSEAIIRAVEKILQQPQP.

7 consecutive transmembrane segments (helical) span residues 26-48, 58-80, 89-111, 126-148, 169-191, 195-214, and 227-249; these read SVCY…SGAT, LHPL…ASVL, VMGL…NIAH, LSTG…SILA, RLAY…PTAL, IPSV…YALL, and CALC…SHMV.

The protein localises to the cell membrane. This is an uncharacterized protein from Treponema pallidum (strain Nichols).